A 303-amino-acid polypeptide reads, in one-letter code: UDP-3-O-acyl-N-acetylglucosamine deacetylase (303 aa).

Zn(2+) contacts are provided by H78, H237, and D241. The active-site Proton donor is H264.

The protein belongs to the LpxC family. Zn(2+) serves as cofactor.

It carries out the reaction a UDP-3-O-[(3R)-3-hydroxyacyl]-N-acetyl-alpha-D-glucosamine + H2O = a UDP-3-O-[(3R)-3-hydroxyacyl]-alpha-D-glucosamine + acetate. It functions in the pathway glycolipid biosynthesis; lipid IV(A) biosynthesis; lipid IV(A) from (3R)-3-hydroxytetradecanoyl-[acyl-carrier-protein] and UDP-N-acetyl-alpha-D-glucosamine: step 2/6. Functionally, catalyzes the hydrolysis of UDP-3-O-myristoyl-N-acetylglucosamine to form UDP-3-O-myristoylglucosamine and acetate, the committed step in lipid A biosynthesis. The chain is UDP-3-O-acyl-N-acetylglucosamine deacetylase from Pseudomonas aeruginosa (strain LESB58).